The sequence spans 82 residues: Delta-actitoxin-Aeq2b 3 (82 aa).

The first 19 residues, 1–19 (MNRLMILVFAAVILALASA), serve as a signal peptide directing secretion. A propeptide spanning residues 20–26 (DEDVDIT) is cleaved from the precursor. 3 cysteine pairs are disulfide-bonded: C32–C79, C34–C69, and C62–C80.

Belongs to the sea anemone sodium channel inhibitory toxin family. Type I subfamily.

The protein localises to the secreted. It is found in the nematocyst. Binds specifically to voltage-gated sodium channels (Nav), thereby delaying their inactivation during signal transduction. Causes death to crabs. The protein is Delta-actitoxin-Aeq2b 3 of Actinia equina (Beadlet anemone).